The following is a 300-amino-acid chain: Cation-efflux pump FieF (300 aa).

4 helical membrane-spanning segments follow: residues A12 to W32, I39 to V59, A82 to I102, and P114 to F134. Positions 45 and 49 each coordinate Zn(2+). Positions 153 and 157 each coordinate Zn(2+). Transmembrane regions (helical) follow at residues S156–H176 and A178–G198.

The protein belongs to the cation diffusion facilitator (CDF) transporter (TC 2.A.4) family. FieF subfamily. In terms of assembly, homodimer.

It is found in the cell inner membrane. The enzyme catalyses Zn(2+)(in) + H(+)(out) = Zn(2+)(out) + H(+)(in). It catalyses the reaction Cd(2+)(in) + H(+)(out) = Cd(2+)(out) + H(+)(in). It carries out the reaction Fe(2+)(in) + H(+)(out) = Fe(2+)(out) + H(+)(in). Its function is as follows. Divalent metal cation transporter which exports Zn(2+), Cd(2+) and possibly Fe(2+). May be involved in zinc and iron detoxification by efflux. This is Cation-efflux pump FieF from Shigella flexneri serotype 5b (strain 8401).